Here is a 313-residue protein sequence, read N- to C-terminus: Olfactory receptor 51A2 (313 aa).

Residues 1-27 (MSIINTSYVEITTFFLVGMPGLEYAHI) are Extracellular-facing. Residue asparagine 5 is glycosylated (N-linked (GlcNAc...) asparagine). The chain crosses the membrane as a helical span at residues 28–48 (WISIPICSMYLIAILGNGTIL). At 49-56 (FIIKTEPS) the chain is on the cytoplasmic side. A helical transmembrane segment spans residues 57–77 (LHGPMYYFLSMLAMSDLGLSL). The Extracellular portion of the chain corresponds to 78–101 (SSLPTVLSIFLFNAPETSSSACFA). Cysteine 99 and cysteine 191 form a disulfide bridge. A helical membrane pass occupies residues 102 to 122 (QEFFIHGFSVLESSVLLIMSF). Topologically, residues 123–141 (DRFLAIHNPLRYTSILTTV) are cytoplasmic. The helical transmembrane segment at 142–162 (RVAQIGIVFSFKSMLLVLPFP) threads the bilayer. Topologically, residues 163 to 198 (FTLRSLRYCKKNQLSHSYCLHQDVMKLACSDNRIDV) are extracellular. A helical transmembrane segment spans residues 199-218 (IYGFFGALCLMVDFILIAVS). At 219-238 (YTLILKTVPGIASKKEELKA) the chain is on the cytoplasmic side. Residues 239–259 (LNTCVSHICAVIIFYLPIINL) form a helical membrane-spanning segment. At 260-274 (AVVHRFAGHVSPLIN) the chain is on the extracellular side. A helical transmembrane segment spans residues 275-295 (VLMANVLLLVPPLMKPIVYCV). The Cytoplasmic segment spans residues 296-313 (KTKQIRVRVVAKLCQWKI).

This sequence belongs to the G-protein coupled receptor 1 family.

The protein localises to the cell membrane. Functionally, odorant receptor. The chain is Olfactory receptor 51A2 (OR51A2) from Homo sapiens (Human).